Reading from the N-terminus, the 383-residue chain is F-box/kelch-repeat protein At2g22030 (383 aa).

In terms of domain architecture, F-box spans 23-71 (SLLFSSLPYDVVLNCLARVSRRYYPNLSCVSKSFQSLVRSPELAHMRSL). Kelch repeat units follow at residues 130-175 (KIYF…VVNG), 176-220 (KLYV…LMRY), and 269-317 (GVCV…GMVD).

This chain is F-box/kelch-repeat protein At2g22030, found in Arabidopsis thaliana (Mouse-ear cress).